The chain runs to 629 residues: Proteoglycan Cow (629 aa).

A signal peptide spans 1–27; sequence MKHSPLIASACLALVLMSSSLIGSTEA. Disordered regions lie at residues 118–186 and 198–223; these read KRRV…ESKE and GDKQ…DDDE. Over residues 128-143 the composition is skewed to acidic residues; the sequence is DSQDAEDINNDDEDNS. A glycan (N-linked (GlcNAc...) asparagine) is linked at Asn-142. Over residues 144–159 the composition is skewed to low complexity; the sequence is SDGGSSNSSPTGTNNA. The segment covering 167–186 has biased composition (acidic residues); the sequence is EETDDEDKSLSLGDDDESKE. Residues 222 to 273 form the Kazal-like domain; that stretch reads DEELDNCKPCPVAKPTFLCGADNRTYSSLCRLDYHNCIHSTSIRIACKGFCP. Intrachain disulfides connect Cys-228–Cys-258, Cys-231–Cys-251, and Cys-240–Cys-272. The N-linked (GlcNAc...) asparagine glycan is linked to Asn-244. Positions 298–356 are disordered; the sequence is SLDQQQQQQQQQQQQQQQQQAYKDSNNNNIMMNSGNIMGGNNNDFNTIMNDKEDNNRHN. The segment covering 301–340 has biased composition (low complexity); the sequence is QQQQQQQQQQQQQQQQQAYKDSNNNNIMMNSGNIMGGNNN. EF-hand domains lie at 468–503 and 508–535; these read ACKT…QNER and FIDT…TDRP. Asp-481, Asn-483, Asp-485, Gln-487, and Glu-492 together coordinate Ca(2+). The region spanning 533-594 is the Thyroglobulin type-1 domain; it reads DRPCAAVRRR…NTRTRGKPNC (62 aa). Intrachain disulfides connect Cys-536-Cys-555, Cys-566-Cys-573, and Cys-575-Cys-594. The disordered stretch occupies residues 602–629; the sequence is ASLTSDDEDEGADDEDSAEGSADQMLVF. Over residues 606–619 the composition is skewed to acidic residues; sequence SDDEDEGADDEDSA. Over residues 620–629 the composition is skewed to low complexity; sequence EGSADQMLVF.

As to quaternary structure, interacts (in heparan sulfate-bound form) with wg. Post-translationally, contains heparan sulfate O-linked oligosaccharides. As to expression, in the wing disk, detected throughout the disk where it is localized primarily to the apical surface but is also present at the basal surface (at protein level).

The protein localises to the secreted. Functionally, binds to the Wnt signaling protein wg, stabilizes it and promotes its extracellular distribution. This is required for establishment of a wg gradient during development to allow for regulation of target genes at different levels. This chain is Proteoglycan Cow, found in Drosophila melanogaster (Fruit fly).